The primary structure comprises 349 residues: Ion-translocating oxidoreductase complex subunit D (349 aa).

Helical transmembrane passes span 20 to 40 (IMFL…YFFG), 42 to 62 (GVLI…IIIL), 83 to 105 (VLLG…CFFA), and 120 to 140 (IFNP…VHMT). Position 184 is an FMN phosphoryl threonine (threonine 184). 5 helical membrane passes run 212-232 (IVSI…CFLL), 236-256 (VICW…SSIT), 263-283 (FFCS…AFFI), 291-311 (SCTK…VWII), and 319-339 (DGIA…DAYL).

This sequence belongs to the NqrB/RnfD family. The complex is composed of six subunits: RnfA, RnfB, RnfC, RnfD, RnfE and RnfG. It depends on FMN as a cofactor.

Its subcellular location is the cell inner membrane. Part of a membrane-bound complex that couples electron transfer with translocation of ions across the membrane. The protein is Ion-translocating oxidoreductase complex subunit D of Buchnera aphidicola subsp. Schizaphis graminum (strain Sg).